The chain runs to 147 residues: Ribonuclease P protein component (147 aa).

Residues 117–147 (TRPRGQSSHRTRASREATSAHTTAVGEQPTQ) form a disordered region.

Belongs to the RnpA family. Consists of a catalytic RNA component (M1 or rnpB) and a protein subunit.

The catalysed reaction is Endonucleolytic cleavage of RNA, removing 5'-extranucleotides from tRNA precursor.. RNaseP catalyzes the removal of the 5'-leader sequence from pre-tRNA to produce the mature 5'-terminus. It can also cleave other RNA substrates such as 4.5S RNA. The protein component plays an auxiliary but essential role in vivo by binding to the 5'-leader sequence and broadening the substrate specificity of the ribozyme. The protein is Ribonuclease P protein component of Thermobifida fusca (strain YX).